Consider the following 131-residue polypeptide: Small ribosomal subunit protein uS8 (131 aa).

Belongs to the universal ribosomal protein uS8 family. As to quaternary structure, part of the 30S ribosomal subunit. Contacts proteins S5 and S12.

One of the primary rRNA binding proteins, it binds directly to 16S rRNA central domain where it helps coordinate assembly of the platform of the 30S subunit. In Cupriavidus metallidurans (strain ATCC 43123 / DSM 2839 / NBRC 102507 / CH34) (Ralstonia metallidurans), this protein is Small ribosomal subunit protein uS8.